Reading from the N-terminus, the 434-residue chain is Methylenetetrahydrofolate--tRNA-(uracil-5-)-methyltransferase TrmFO (434 aa).

Residue 10–15 coordinates FAD; that stretch reads GAGLAG.

Belongs to the MnmG family. TrmFO subfamily. The cofactor is FAD.

The protein resides in the cytoplasm. The catalysed reaction is uridine(54) in tRNA + (6R)-5,10-methylene-5,6,7,8-tetrahydrofolate + NADH + H(+) = 5-methyluridine(54) in tRNA + (6S)-5,6,7,8-tetrahydrofolate + NAD(+). It carries out the reaction uridine(54) in tRNA + (6R)-5,10-methylene-5,6,7,8-tetrahydrofolate + NADPH + H(+) = 5-methyluridine(54) in tRNA + (6S)-5,6,7,8-tetrahydrofolate + NADP(+). Functionally, catalyzes the folate-dependent formation of 5-methyl-uridine at position 54 (M-5-U54) in all tRNAs. The protein is Methylenetetrahydrofolate--tRNA-(uracil-5-)-methyltransferase TrmFO of Bacillus cytotoxicus (strain DSM 22905 / CIP 110041 / 391-98 / NVH 391-98).